Consider the following 352-residue polypeptide: Mitochondrial ubiquitin ligase activator of NFKB 1 (352 aa).

The Cytoplasmic segment spans residues 1 to 8 (MENGGRPS). The helical transmembrane segment at 9-29 (LCQFILLGTTSVVTAALYSVY) threads the bilayer. The Mitochondrial intermembrane segment spans residues 30 to 238 (RQKAWVSQEL…LLQRQESSVR (209 aa)). Residue Lys52 forms a Glycyl lysine isopeptide (Lys-Gly) (interchain with G-Cter in ubiquitin) linkage. Residues 239–259 (LWKVLALVFGFATCATLFFIL) traverse the membrane as a helical segment. Residues 260–352 (RKQYLQRQER…ITRVIPLYNS (93 aa)) lie on the Cytoplasmic side of the membrane. Glycyl lysine isopeptide (Lys-Gly) (interchain with G-Cter in ubiquitin) cross-links involve residues Lys273 and Lys299. Residues 302–340 (CVVCLSSFKSCVFLECGHVCSCTECYRALPEPKKCPICR) form an RING-type zinc finger.

Homooligomer. Interacts with MAP3K7/TAK1. Interacts with UBC9. Interacts with and sumoylates DNM1L. Interacts with MAVS. Interacts with TP53 (via N-terminus); the interaction leads to ubiquitination and proteasomal degradation of TP53. In terms of processing, ubiquitinated by PRKN during mitophagy, leading to its degradation and enhancement of mitophagy. Deubiquitinated by USP30.

It localises to the mitochondrion outer membrane. Its subcellular location is the peroxisome. It catalyses the reaction S-ubiquitinyl-[E2 ubiquitin-conjugating enzyme]-L-cysteine + [acceptor protein]-L-lysine = [E2 ubiquitin-conjugating enzyme]-L-cysteine + N(6)-ubiquitinyl-[acceptor protein]-L-lysine.. It functions in the pathway protein modification; protein ubiquitination. It participates in protein modification; protein sumoylation. Functionally, exhibits weak E3 ubiquitin-protein ligase activity. E3 ubiquitin ligases accept ubiquitin from an E2 ubiquitin-conjugating enzyme in the form of a thioester and then directly transfer the ubiquitin to targeted substrates. Can ubiquitinate AKT1 preferentially at 'Lys-284' involving 'Lys-48'-linked polyubiquitination and seems to be involved in regulation of Akt signaling by targeting phosphorylated Akt to proteasomal degradation. Mediates polyubiquitination of cytoplasmic TP53 at 'Lys-24' which targets TP53 for proteasomal degradation, thus reducing TP53 levels in the cytoplasm and mitochondrion. Proposed to preferentially act as a SUMO E3 ligase at physiological concentrations. Plays a role in the control of mitochondrial morphology by promoting mitochondrial fragmentation, and influences mitochondrial localization. Likely to promote mitochondrial fission through negatively regulating the mitochondrial fusion proteins MFN1 and MFN2, acting in a pathway that is parallel to the PRKN/PINK1 regulatory pathway. May also be involved in the sumoylation of the membrane fission protein DNM1L. Inhibits cell growth. When overexpressed, activates JNK through MAP3K7/TAK1 and induces caspase-dependent apoptosis. Involved in the modulation of innate immune defense against viruses by inhibiting RIGI-dependent antiviral response. Can mediate RIGI sumoylation and disrupt its polyubiquitination. The sequence is that of Mitochondrial ubiquitin ligase activator of NFKB 1 (MUL1) from Macaca fascicularis (Crab-eating macaque).